A 189-amino-acid chain; its full sequence is uncharacterized protein (189 aa).

It to M.jannaschii MJ1461.

This is an uncharacterized protein from Methanocaldococcus jannaschii (strain ATCC 43067 / DSM 2661 / JAL-1 / JCM 10045 / NBRC 100440) (Methanococcus jannaschii).